The sequence spans 493 residues: Signal recognition particle subunit SRP54 3 (493 aa).

Residues 1–294 (MVLADVGGSI…NVEPFVARLL (294 aa)) are G-domain. GTP contacts are provided by residues 107–114 (GLQGSGKT), 189–193 (DTSGR), and 247–250 (TKLD). Residues 295 to 493 (GRGDLPGLID…KMLAGMRGGA (199 aa)) form an M-domain region.

The protein belongs to the GTP-binding SRP family. SRP54 subfamily. In terms of assembly, component of a signal recognition particle (SRP) complex that consists of a 7SL RNA molecule of 300 nucleotides and six protein subunits: SRP72, SRP68, SRP54, SRP19, SRP14 and SRP9.

It is found in the cytoplasm. Its subcellular location is the endoplasmic reticulum. It carries out the reaction GTP + H2O = GDP + phosphate + H(+). Functionally, component of the signal recognition particle (SRP) complex, a ribonucleoprotein complex that mediates the cotranslational targeting of secretory and membrane proteins to the endoplasmic reticulum (ER). As part of the SRP complex, associates with the SRP receptor (SR) component SRPRA to target secretory proteins to the endoplasmic reticulum membrane. Binds to the signal sequence of presecretory proteins when they emerge from the ribosomes. Displays basal GTPase activity, and stimulates reciprocal GTPase activation of the SR subunit SRPRA. Forms a guanosine 5'-triphosphate (GTP)-dependent complex with the SR subunit SRPRA. SR compaction and GTPase mediated rearrangement of SR drive SRP-mediated cotranslational protein translocation into the ER. Requires the presence of SRP9/SRP14 and/or SRP19 to stably interact with RNA. This Hordeum vulgare (Barley) protein is Signal recognition particle subunit SRP54 3 (SRP54-3).